The sequence spans 155 residues: Regulatory protein RecX (155 aa).

It belongs to the RecX family.

The protein resides in the cytoplasm. In terms of biological role, modulates RecA activity. The protein is Regulatory protein RecX of Vibrio parahaemolyticus serotype O3:K6 (strain RIMD 2210633).